Reading from the N-terminus, the 435-residue chain is MTNYHFTGIKGSGMSALAQILHDLNENVQGSDIEETIFTQKPLERKGITLLPFSRDNIKNGQHVIVSAAYGETHEEIKRARELGLKVDVYPEFLGSFIKQFTSIAVSGSHGKTSTTGLLAHVLGSVEPTSYLIGDGTGKGAANSTYFVFEACEYRRHFLNYSPDYCVMTNIDFDHPDYFKSVEDVVSAFQTMAKQVNKAIIACGDDEHLQTLQANVPIVYYGLGDHNDFQAKSIKNTPEGTAFDAWVRGDLFGSFVIPGFGDHNVKNALSVIALCHYEGIGYEDIVEHLKTFAGVKRRFSEKRSGKQILIDDYAHHPTEIAATIEATKKKYHDREVTAIFQPHTFTRTKTFLNEFAEALSQADHVYLCDIFGSAREEQGSLSIEQLQALVDGAKLLTEAEIETLKGHGESVLLFMGAGDIQKYQKAYEALIESSS.

Residue 108 to 114 (GSHGKTS) participates in ATP binding.

The protein belongs to the MurCDEF family.

The protein localises to the cytoplasm. It carries out the reaction UDP-N-acetyl-alpha-D-muramate + L-alanine + ATP = UDP-N-acetyl-alpha-D-muramoyl-L-alanine + ADP + phosphate + H(+). It participates in cell wall biogenesis; peptidoglycan biosynthesis. Functionally, cell wall formation. The sequence is that of UDP-N-acetylmuramate--L-alanine ligase from Shouchella clausii (strain KSM-K16) (Alkalihalobacillus clausii).